Here is a 464-residue protein sequence, read N- to C-terminus: MLAARRLLGWSLPARVSVRFSGDTTAPKKTSFGSLKDEDRIFTNLYGRHDWRLKGALSRGDWYKTKEILLKGPDWILGEIKTSGLRGRGGAGFPTGLKWSFMNKPSDGRPKYLVVNADEGEPGTCKDREIIRHDPHKLVEGCLVGGRAMGARAAYIYIRGEFYNEASNLQVAIREAYEAGLIGKNACGSGYDFDVFVVRGAGAYICGEETALIESIEGKQGKPRLKPPFPADVGVFGCPTTVANVETVAVSPTICRRGGTWFAGFGRERNSGTKLFNISGHVNYPCTVEEEMSVPLKELIEKHAGGVTGGWDNLLAVIPGGSSTPLIPKSVCETVLMDFDALVQAQTGLGTAAVIVMDRSTDIVKAIARLIEFYKHESCGQCTPCREGVDWMNKVMARFVRGDAQPAEIDSLWEISKQIEGHTICALGDGAAWPVQGLIRHFRPELEERMQRFAQQHQAQQAAS.

A mitochondrion-targeting transit peptide spans 1–20; the sequence is MLAARRLLGWSLPARVSVRF. Lysine 81 is modified (N6-acetyllysine; alternate). The residue at position 81 (lysine 81) is an N6-succinyllysine; alternate. 87-96 is a binding site for NADH; it reads GRGGAGFPTG. Lysine 104 is modified (N6-acetyllysine). 199-247 serves as a coordination point for FMN; the sequence is RGAGAYICGEETALIESIEGKQGKPRLKPPFPADVGVFGCPTTVANVET. Arginine 257 is subject to Omega-N-methylarginine. N6-acetyllysine is present on lysine 375. Residues cysteine 379, cysteine 382, cysteine 385, and cysteine 425 each coordinate [4Fe-4S] cluster.

It belongs to the complex I 51 kDa subunit family. As to quaternary structure, core subunit of respiratory chain NADH dehydrogenase (Complex I) which is composed of 45 different subunits. This is a component of the flavoprotein-sulfur (FP) fragment of the enzyme. Interacts with RAB5IF. Requires FMN as cofactor. The cofactor is [4Fe-4S] cluster.

It is found in the mitochondrion inner membrane. It catalyses the reaction a ubiquinone + NADH + 5 H(+)(in) = a ubiquinol + NAD(+) + 4 H(+)(out). In terms of biological role, core subunit of the mitochondrial membrane respiratory chain NADH dehydrogenase (Complex I) which catalyzes electron transfer from NADH through the respiratory chain, using ubiquinone as an electron acceptor. Part of the peripheral arm of the enzyme, where the electrons from NADH are accepted by flavin mononucleotide (FMN) and then passed along a chain of iron-sulfur clusters by electron tunnelling to the final acceptor ubiquinone. Contains FMN, which is the initial electron acceptor as well as one iron-sulfur cluster. In Pongo pygmaeus (Bornean orangutan), this protein is NADH dehydrogenase [ubiquinone] flavoprotein 1, mitochondrial.